The following is a 136-amino-acid chain: Congerin-2 (136 aa).

Position 2 is an N-acetylserine (Ser2). The Galectin domain maps to 4–136 (RAEVRNIPFK…DARLTFVRLE (133 aa)). An a beta-D-galactoside-binding site is contributed by 70–76 (WQQEERS).

Homodimer.

This protein binds beta-galactoside. Its physiological function is not yet known. This chain is Congerin-2, found in Conger myriaster (Conger eel).